The following is a 1519-amino-acid chain: Dicer-like protein 1 (1519 aa).

Residues 1–13 are compositionally biased toward polar residues; sequence MTHQNTETASLAT. A disordered region spans residues 1–62; sequence MTHQNTETAS…KDPSQRQRQQ (62 aa). Over residues 39–48 the composition is skewed to acidic residues; the sequence is SDESEGSEEE. One can recognise a Helicase ATP-binding domain in the interval 116-297; sequence LFERAKVQNT…EAARNLEALL (182 aa). ATP is bound at residue 129–136; the sequence is LDTGSGKT. Residues 242 to 245 carry the DEAH box motif; it reads DEAH. The region spanning 431–601 is the Helicase C-terminal domain; the sequence is ALSSKVRVLW…QLLPEDRILH (171 aa). The 91-residue stretch at 634–724 folds into the Dicer dsRNA-binding fold domain; it reads AITVLARYAS…NSVYHRRLPA (91 aa). A PAZ domain is found at 882-1001; the sequence is DDIEYQADMP…ICIEPLKISA (120 aa). RNase III domains lie at 1026–1184 and 1235–1387; these read GLEA…LTPG and CRRV…VDSN. Mg(2+) is bound by residues Glu-1275, Asp-1373, and Glu-1376. The DRBM domain occupies 1421–1489; that stretch reads TFLHNKLTNE…SENALTELLH (69 aa). The Zn(2+) site is built by Cys-1433, His-1460, Cys-1501, and Cys-1503.

This sequence belongs to the helicase family. Dicer subfamily. Requires Mg(2+) as cofactor. It depends on Mn(2+) as a cofactor.

Dicer-like endonuclease involved in cleaving double-stranded RNA in the RNA interference (RNAi) pathway. Produces 21 to 25 bp dsRNAs (siRNAs) which target the selective destruction of homologous RNAs leading to sequence-specific suppression of gene expression, called post-transcriptional gene silencing (PTGS). Part of a broad host defense response against viral infection and transposons. The chain is Dicer-like protein 1 (dcl1) from Aspergillus terreus (strain NIH 2624 / FGSC A1156).